The sequence spans 33 residues: Rugosin-B (33 aa).

The cysteines at positions 27 and 33 are disulfide-linked.

It belongs to the frog skin active peptide (FSAP) family. Brevinin subfamily. In terms of tissue distribution, expressed by the skin glands.

It localises to the secreted. Functionally, shows antibacterial activity against both Gram-negative and Gram-positive bacteria. The chain is Rugosin-B from Glandirana rugosa (Japanese wrinkled frog).